The following is a 193-amino-acid chain: Dense granule protein 2 (193 aa).

An N-linked (GlcNAc...) asparagine glycan is attached at asparagine 4. The chain crosses the membrane as a helical span at residues 14-34; sequence FSPLTVVMLAVTLVAFMGVPL. Asparagine 74 carries N-linked (GlcNAc...) asparagine glycosylation. The interval 75 to 140 is disordered; the sequence is SSELAGSRDK…APKPVPVRSA (66 aa). Residues 88-98 are compositionally biased toward acidic residues; that stretch reads EAEEEAAEVET. The chain crosses the membrane as a helical span at residues 153-173; it reads HRVIGTAVIAAVVAALLWKFS. Residues 174 to 193 form a disordered region; sequence RRRSGAPREGGENENGGEEK.

This sequence belongs to the Gra6 family.

Its subcellular location is the membrane. The polypeptide is Dense granule protein 2 (DG2) (Neospora caninum (Coccidian parasite)).